The primary structure comprises 265 residues: Eukaryotic translation initiation factor 3 subunit J (265 aa).

The segment covering 24-34 (AGDEPILDSWD) has biased composition (acidic residues). The tract at residues 24–74 (AGDEPILDSWDEEPKAKKEAAKPKPKPKAGGKKNAKGEEKKEQVLAIDELD) is disordered. Basic and acidic residues predominate over residues 35–45 (EEPKAKKEAAK). Positions 46 to 57 (PKPKPKAGGKKN) are enriched in basic residues. 2 coiled-coil regions span residues 78-106 (RKELMKKAELESDLNNAADLLGDLEMAEE) and 190-220 (IENIRQTVATLNILIKDKEKAERQARLARVK).

This sequence belongs to the eIF-3 subunit J family. Component of the eukaryotic translation initiation factor 3 (eIF-3) complex.

It localises to the cytoplasm. In terms of biological role, component of the eukaryotic translation initiation factor 3 (eIF-3) complex, which is involved in protein synthesis of a specialized repertoire of mRNAs and, together with other initiation factors, stimulates binding of mRNA and methionyl-tRNAi to the 40S ribosome. The eIF-3 complex specifically targets and initiates translation of a subset of mRNAs involved in cell proliferation. The chain is Eukaryotic translation initiation factor 3 subunit J from Candida glabrata (strain ATCC 2001 / BCRC 20586 / JCM 3761 / NBRC 0622 / NRRL Y-65 / CBS 138) (Yeast).